Consider the following 329-residue polypeptide: Acetyl-coenzyme A carboxylase carboxyl transferase subunit alpha (329 aa).

Residues glutamine 40–aspartate 294 form the CoA carboxyltransferase C-terminal domain.

The protein belongs to the AccA family. In terms of assembly, acetyl-CoA carboxylase is a heterohexamer composed of biotin carboxyl carrier protein (AccB), biotin carboxylase (AccC) and two subunits each of ACCase subunit alpha (AccA) and ACCase subunit beta (AccD).

It is found in the cytoplasm. It catalyses the reaction N(6)-carboxybiotinyl-L-lysyl-[protein] + acetyl-CoA = N(6)-biotinyl-L-lysyl-[protein] + malonyl-CoA. Its pathway is lipid metabolism; malonyl-CoA biosynthesis; malonyl-CoA from acetyl-CoA: step 1/1. Component of the acetyl coenzyme A carboxylase (ACC) complex. First, biotin carboxylase catalyzes the carboxylation of biotin on its carrier protein (BCCP) and then the CO(2) group is transferred by the carboxyltransferase to acetyl-CoA to form malonyl-CoA. In Prochlorococcus marinus (strain MIT 9303), this protein is Acetyl-coenzyme A carboxylase carboxyl transferase subunit alpha.